The primary structure comprises 425 residues: Serine/threonine-protein kinase VRK1 (425 aa).

The Protein kinase domain maps to 38–329 (WKLGSAVGQG…KLRGILQQGL (292 aa)). Residues 44–52 (VGQGGFGLL) and lysine 72 contribute to the ATP site. Residue aspartate 178 is the Proton acceptor of the active site. Residues 343–425 (GVATNSTSLP…KSRGRPKKNS (83 aa)) form a disordered region. The segment covering 415 to 425 (KKSRGRPKKNS) has biased composition (basic residues).

This sequence belongs to the protein kinase superfamily. CK1 Ser/Thr protein kinase family. VRK subfamily.

The protein localises to the nucleus. Its subcellular location is the cytoplasm. It is found in the cajal body. It carries out the reaction L-seryl-[protein] + ATP = O-phospho-L-seryl-[protein] + ADP + H(+). The enzyme catalyses L-threonyl-[protein] + ATP = O-phospho-L-threonyl-[protein] + ADP + H(+). Serine/threonine kinase involved in the regulation of key cellular processes including the cell cycle, nuclear condensation, transcription regulation, and DNA damage response. Controls chromatin organization and remodeling by mediating phosphorylation of histone H3 on 'Thr-4' and histone H2AX (H2aXT4ph). It also phosphorylates KAT5 in response to DNA damage, promoting KAT5 association with chromatin and histone acetyltransferase activity. Is involved in the regulation of cell cycle progression of neural progenitors, and is required for proper cortical neuronal migration. Is involved in neurite elongation and branching in motor neurons, and has an essential role in Cajal bodies assembly, acting through COIL phosphorylation and the control of coilin degradation. Involved in Golgi disassembly during the cell cycle: following phosphorylation by PLK3 during mitosis, it is required to induce Golgi fragmentation. Phosphorylates BANF1: disrupts its ability to bind DNA, reduces its binding to LEM domain-containing proteins and causes its relocalization from the nucleus to the cytoplasm. Phosphorylates TP53BP1 and p53/TP53 on 'Thr-18', preventing the interaction between p53/TP53 and MDM2. Phosphorylates ATF2 which activates its transcriptional activity. Phosphorylates JUN. The chain is Serine/threonine-protein kinase VRK1 (vrk1) from Danio rerio (Zebrafish).